Consider the following 224-residue polypeptide: MVSAIVVAGGKGKRMGTVQSKQYLSLNGKPILYYTIKSFLDCKLVDNIILVVPSHEIDYCEKEILEKNSLKVNKIVAGGDERYDSVYNGLIEAKGSDIVLIHDGVRPFVSKETIENAIKYSEEYGAAAPGVMPKDTIKIIDDNRFSIDTPNRSHLISVQTPQAFKFDLIYDCHKKIKNENVNITDDTMVAEYFGNKVYIYPGEYTNIKITTPEDLIIGEYLVNR.

Belongs to the IspD/TarI cytidylyltransferase family. IspD subfamily.

The enzyme catalyses 2-C-methyl-D-erythritol 4-phosphate + CTP + H(+) = 4-CDP-2-C-methyl-D-erythritol + diphosphate. It participates in isoprenoid biosynthesis; isopentenyl diphosphate biosynthesis via DXP pathway; isopentenyl diphosphate from 1-deoxy-D-xylulose 5-phosphate: step 2/6. Catalyzes the formation of 4-diphosphocytidyl-2-C-methyl-D-erythritol from CTP and 2-C-methyl-D-erythritol 4-phosphate (MEP). The chain is 2-C-methyl-D-erythritol 4-phosphate cytidylyltransferase from Clostridium botulinum (strain Eklund 17B / Type B).